A 345-amino-acid chain; its full sequence is Dihydroorotase (345 aa).

2 residues coordinate Zn(2+): His-13 and His-15. Residues 15–17 and Asn-41 contribute to the substrate site; that span reads HFR. Lys-98, His-135, and His-173 together coordinate Zn(2+). An N6-carboxylysine modification is found at Lys-98. Position 135 (His-135) interacts with substrate. Substrate is bound at residue Leu-218. Zn(2+) is bound at residue Asp-246. Asp-246 is an active-site residue. Positions 250 and 262 each coordinate substrate.

This sequence belongs to the metallo-dependent hydrolases superfamily. DHOase family. Class II DHOase subfamily. In terms of assembly, homodimer. Requires Zn(2+) as cofactor.

It carries out the reaction (S)-dihydroorotate + H2O = N-carbamoyl-L-aspartate + H(+). The protein operates within pyrimidine metabolism; UMP biosynthesis via de novo pathway; (S)-dihydroorotate from bicarbonate: step 3/3. Its function is as follows. Catalyzes the reversible cyclization of carbamoyl aspartate to dihydroorotate. The sequence is that of Dihydroorotase from Shewanella halifaxensis (strain HAW-EB4).